Reading from the N-terminus, the 192-residue chain is Ribosomal RNA large subunit methyltransferase E (192 aa).

S-adenosyl-L-methionine contacts are provided by G48, F50, D67, D85, and D107. K147 acts as the Proton acceptor in catalysis.

This sequence belongs to the class I-like SAM-binding methyltransferase superfamily. RNA methyltransferase RlmE family.

Its subcellular location is the cytoplasm. It carries out the reaction uridine(2552) in 23S rRNA + S-adenosyl-L-methionine = 2'-O-methyluridine(2552) in 23S rRNA + S-adenosyl-L-homocysteine + H(+). Its function is as follows. Specifically methylates the uridine in position 2552 of 23S rRNA at the 2'-O position of the ribose in the fully assembled 50S ribosomal subunit. The chain is Ribosomal RNA large subunit methyltransferase E from Borrelia garinii subsp. bavariensis (strain ATCC BAA-2496 / DSM 23469 / PBi) (Borreliella bavariensis).